A 155-amino-acid polypeptide reads, in one-letter code: Perlucin (155 aa).

Intrachain disulfides connect cysteine 2–cysteine 13, cysteine 30–cysteine 127, and cysteine 102–cysteine 119. The region spanning 9–128 (NRRSCYWFST…CQKPSHFICE (120 aa)) is the C-type lectin domain. Asparagine 84 is a glycosylation site (N-linked (GlcNAc...) asparagine). A run of 2 repeats spans residues 136-145 (NSLHANLQQR) and 146-155 (DSLHANLQQR).

Glycosylated.

Functionally, may promote nucleation and/or growth of calcium carbonate crystals. Binds to D-galactose and D-mannose/D-glucose. This Haliotis laevigata (Smooth Australian abalone) protein is Perlucin.